The primary structure comprises 208 residues: dITP/XTP pyrophosphatase (208 aa).

A substrate-binding site is contributed by 11–16 (TGNAKK). D73 (proton acceptor) is an active-site residue. D73 contributes to the Mg(2+) binding site. Residues S74, 157 to 160 (FGYD), K180, and 185 to 186 (HR) each bind substrate.

The protein belongs to the HAM1 NTPase family. Homodimer. Mg(2+) is required as a cofactor.

The catalysed reaction is XTP + H2O = XMP + diphosphate + H(+). The enzyme catalyses dITP + H2O = dIMP + diphosphate + H(+). It catalyses the reaction ITP + H2O = IMP + diphosphate + H(+). Its function is as follows. Pyrophosphatase that catalyzes the hydrolysis of nucleoside triphosphates to their monophosphate derivatives, with a high preference for the non-canonical purine nucleotides XTP (xanthosine triphosphate), dITP (deoxyinosine triphosphate) and ITP. Seems to function as a house-cleaning enzyme that removes non-canonical purine nucleotides from the nucleotide pool, thus preventing their incorporation into DNA/RNA and avoiding chromosomal lesions. The chain is dITP/XTP pyrophosphatase from Rhodopirellula baltica (strain DSM 10527 / NCIMB 13988 / SH1).